A 320-amino-acid chain; its full sequence is Chorion protein S36 (320 aa).

An N-terminal signal peptide occupies residues 1–18 (MNCFLFTLFFVAAPLATA). 5 repeat units span residues 178-181 (AAPV), 258-261 (AAPA), 266-269 (AAPA), 274-277 (AAPA), and Ala290. The tract at residues 259-320 (APAQSYNAAP…YGSAPPASGY (62 aa)) is disordered.

It belongs to the chorion protein S36 family.

Its subcellular location is the secreted. Chorion membrane (egg shell) protein; plays a role in protecting the egg from the environment. The sequence is that of Chorion protein S36 (Cp36) from Ceratitis capitata (Mediterranean fruit fly).